We begin with the raw amino-acid sequence, 114 residues long: UPF0342 protein NWMN_1737 (114 aa).

This sequence belongs to the UPF0342 family.

In Staphylococcus aureus (strain Newman), this protein is UPF0342 protein NWMN_1737.